A 480-amino-acid polypeptide reads, in one-letter code: Aspartyl/glutamyl-tRNA(Asn/Gln) amidotransferase subunit B (480 aa).

Belongs to the GatB/GatE family. GatB subfamily. As to quaternary structure, heterotrimer of A, B and C subunits.

The enzyme catalyses L-glutamyl-tRNA(Gln) + L-glutamine + ATP + H2O = L-glutaminyl-tRNA(Gln) + L-glutamate + ADP + phosphate + H(+). It catalyses the reaction L-aspartyl-tRNA(Asn) + L-glutamine + ATP + H2O = L-asparaginyl-tRNA(Asn) + L-glutamate + ADP + phosphate + 2 H(+). Allows the formation of correctly charged Asn-tRNA(Asn) or Gln-tRNA(Gln) through the transamidation of misacylated Asp-tRNA(Asn) or Glu-tRNA(Gln) in organisms which lack either or both of asparaginyl-tRNA or glutaminyl-tRNA synthetases. The reaction takes place in the presence of glutamine and ATP through an activated phospho-Asp-tRNA(Asn) or phospho-Glu-tRNA(Gln). This Streptococcus thermophilus (strain ATCC BAA-250 / LMG 18311) protein is Aspartyl/glutamyl-tRNA(Asn/Gln) amidotransferase subunit B.